The sequence spans 173 residues: Aliphatic sulfonate oxidoreductase, polyferredoxin-like subunit (173 aa).

4Fe-4S ferredoxin-type domains lie at 9–40, 48–80, and 82–111; these read IWIL…WPEA, LFPG…VDEK, and GAVV…IPAG. Positions 18, 21, 24, 28, 58, 61, 66, 70, 91, 94, 97, 101, 118, 121, 127, and 131 each coordinate [4Fe-4S] cluster.

In terms of assembly, heterodimer composed of a small WOR5-S subunit, with four [4Fe-4S] clusters, and a large WOR5-L subunit, containing the active site tungsto-bispyranopterin cofactor as well as another [4Fe-4S] cluster. Requires [4Fe-4S] cluster as cofactor.

The protein resides in the cytoplasm. Polyferredoxin-like subunit of an oxidoreductase that can desulfonate and oxidize aliphatic sulfonates such as taurine. May serve as a an electron-transfer subunit between the catalytic subunit and ferredoxin. The polypeptide is Aliphatic sulfonate oxidoreductase, polyferredoxin-like subunit (Pyrococcus furiosus (strain ATCC 43587 / DSM 3638 / JCM 8422 / Vc1)).